A 108-amino-acid chain; its full sequence is UPF0145 protein HDEF_1024 (108 aa).

This sequence belongs to the UPF0145 family.

The polypeptide is UPF0145 protein HDEF_1024 (Hamiltonella defensa subsp. Acyrthosiphon pisum (strain 5AT)).